We begin with the raw amino-acid sequence, 408 residues long: Broad specificity amino-acid racemase (408 aa).

Residues 1 to 21 (MHKKTLLATLILGLLAGQAVA) form the signal peptide. Cys70 and Cys96 form a disulfide bridge. The active-site Proton acceptor is Lys74. Lys74 is subject to N6-(pyridoxal phosphate)lysine. Residue Arg173 coordinates substrate. Tyr300 serves as the catalytic Proton acceptor. Met348 serves as a coordination point for substrate.

The protein belongs to the alanine racemase family. Bsr subfamily. In terms of assembly, homodimer. Pyridoxal 5'-phosphate is required as a cofactor.

It is found in the periplasm. The catalysed reaction is an L-alpha-amino acid = a D-alpha-amino acid. It carries out the reaction L-lysine = D-lysine. It catalyses the reaction L-arginine = D-arginine. The enzyme catalyses L-alanine = D-alanine. The catalysed reaction is L-serine = D-serine. It carries out the reaction L-methionine = D-methionine. It catalyses the reaction L-leucine = D-leucine. The enzyme catalyses L-cysteine = D-cysteine. The catalysed reaction is L-glutamine = D-glutamine. It carries out the reaction L-asparagine = D-asparagine. It catalyses the reaction L-histidine = D-histidine. In terms of biological role, amino-acid racemase able to utilize a broad range of substrates. Reversibly racemizes ten of the 19 natural chiral amino acids known, including both non-beta-branched aliphatic amino acids (Ala, Leu, Met, Ser, Cys, Gln and Asn) and positively charged amino acids (His, Lys and Arg). Is not active on negatively charged (Glu and Asp) or aromatic (Tyr, Trp and Phe) amino acids and displays minimal activity towards beta-branched aliphatic (Ile, Val and Thr) substrates. Enables bacteria to produce and release extracellular non-canonical D-amino acids (NCDAAs) that regulate diverse cellular processes. The polypeptide is Broad specificity amino-acid racemase (Aeromonas hydrophila subsp. hydrophila (strain ATCC 7966 / DSM 30187 / BCRC 13018 / CCUG 14551 / JCM 1027 / KCTC 2358 / NCIMB 9240 / NCTC 8049)).